The chain runs to 129 residues: Large ribosomal subunit protein bL17 (129 aa).

Belongs to the bacterial ribosomal protein bL17 family. Part of the 50S ribosomal subunit. Contacts protein L32.

The chain is Large ribosomal subunit protein bL17 from Stutzerimonas stutzeri (strain A1501) (Pseudomonas stutzeri).